The sequence spans 361 residues: NudC domain-containing protein 3 (361 aa).

A compositionally biased stretch (basic and acidic residues) spans 87–97 (KIRRKEEEEAK). The segment at 87-106 (KIRRKEEEEAKTVSAAAAEK) is disordered. Phosphoserine is present on Ser-146. Residues 185–277 (AVRENYTWSQ…VGEYWWNAIL (93 aa)) enclose the CS domain. Phosphoserine occurs at positions 340 and 355.

This Pongo abelii (Sumatran orangutan) protein is NudC domain-containing protein 3 (NUDCD3).